The following is an 86-amino-acid chain: Cell division topological specificity factor (86 aa).

It belongs to the MinE family.

Its function is as follows. Prevents the cell division inhibition by proteins MinC and MinD at internal division sites while permitting inhibition at polar sites. This ensures cell division at the proper site by restricting the formation of a division septum at the midpoint of the long axis of the cell. The protein is Cell division topological specificity factor of Albidiferax ferrireducens (strain ATCC BAA-621 / DSM 15236 / T118) (Rhodoferax ferrireducens).